The following is a 342-amino-acid chain: Heat-inducible transcription repressor HrcA (342 aa).

The protein belongs to the HrcA family.

Functionally, negative regulator of class I heat shock genes (grpE-dnaK-dnaJ and groELS operons). Prevents heat-shock induction of these operons. The protein is Heat-inducible transcription repressor HrcA of Corynebacterium efficiens (strain DSM 44549 / YS-314 / AJ 12310 / JCM 11189 / NBRC 100395).